Consider the following 397-residue polypeptide: Phosphoglycerate kinase (397 aa).

Substrate is bound by residues 21–23 (DVN), Arg-36, 59–62 (HFGR), Arg-119, and Arg-152. Residues Lys-202, Glu-324, and 354-357 (GGDT) each bind ATP.

This sequence belongs to the phosphoglycerate kinase family. Monomer.

It is found in the cytoplasm. It catalyses the reaction (2R)-3-phosphoglycerate + ATP = (2R)-3-phospho-glyceroyl phosphate + ADP. Its pathway is carbohydrate degradation; glycolysis; pyruvate from D-glyceraldehyde 3-phosphate: step 2/5. The sequence is that of Phosphoglycerate kinase from Cereibacter sphaeroides (strain KD131 / KCTC 12085) (Rhodobacter sphaeroides).